We begin with the raw amino-acid sequence, 231 residues long: MTDISIPAGDDGSFSAYVAKPAGGGPAPGLVVIQEIFGVNQVMRDLCDAFAAQGWLAVCPDLFWRQEPGVQITDKTQEEWNRAFALMNGMDQDKRWTTSRPPCRGCARIRIAPAKRVGRLLLGRRLAFMMAARSDSDANVSYYGVGLDGLVGEAASITKPLLMHIAEKDQFVPAEAREKVLAAVKGNPNVTAHVYPGVDHAFARAGGAHFEPEAAELANGRTAAFFKQHLG.

Residues aspartate 169 and histidine 200 contribute to the active site.

Belongs to the dienelactone hydrolase family.

The enzyme catalyses 2-(5-oxo-2,5-dihydrofuran-2-ylidene)acetate + H2O = 4-oxohex-2-enedioate + H(+). This chain is Putative carboxymethylenebutenolidase, found in Azospirillum brasilense.